A 397-amino-acid chain; its full sequence is Phosphoglycerate kinase (397 aa).

Residues 21–23, Arg-37, 60–63, Arg-119, and Arg-152 each bind substrate; these read DFN and HLGR. ATP contacts are provided by residues Lys-203, Gly-294, Glu-325, and 354–357; that span reads GGDS.

It belongs to the phosphoglycerate kinase family. In terms of assembly, monomer.

Its subcellular location is the cytoplasm. It catalyses the reaction (2R)-3-phosphoglycerate + ATP = (2R)-3-phospho-glyceroyl phosphate + ADP. It functions in the pathway carbohydrate degradation; glycolysis; pyruvate from D-glyceraldehyde 3-phosphate: step 2/5. The sequence is that of Phosphoglycerate kinase from Prosthecochloris aestuarii (strain DSM 271 / SK 413).